A 343-amino-acid polypeptide reads, in one-letter code: Fructose-1,6-bisphosphatase class 1 (343 aa).

Mg(2+)-binding residues include Glu-91, Asp-113, Ile-115, and Asp-116. Substrate contacts are provided by residues 116 to 119, Asn-210, and Lys-276; that span reads DGSS. Position 282 (Glu-282) interacts with Mg(2+).

This sequence belongs to the FBPase class 1 family. In terms of assembly, homotetramer. Mg(2+) serves as cofactor.

Its subcellular location is the cytoplasm. The catalysed reaction is beta-D-fructose 1,6-bisphosphate + H2O = beta-D-fructose 6-phosphate + phosphate. Its pathway is carbohydrate biosynthesis; gluconeogenesis. The polypeptide is Fructose-1,6-bisphosphatase class 1 (Parvibaculum lavamentivorans (strain DS-1 / DSM 13023 / NCIMB 13966)).